Reading from the N-terminus, the 238-residue chain is Pyridoxine 5'-phosphate synthase (238 aa).

Residue asparagine 7 coordinates 3-amino-2-oxopropyl phosphate. 9–10 (DH) contacts 1-deoxy-D-xylulose 5-phosphate. Arginine 18 is a 3-amino-2-oxopropyl phosphate binding site. The Proton acceptor role is filled by histidine 43. Positions 45 and 50 each coordinate 1-deoxy-D-xylulose 5-phosphate. Glutamate 70 acts as the Proton acceptor in catalysis. Residue threonine 100 coordinates 1-deoxy-D-xylulose 5-phosphate. The active-site Proton donor is histidine 190. 3-amino-2-oxopropyl phosphate contacts are provided by residues glycine 191 and 212–213 (GH).

It belongs to the PNP synthase family. As to quaternary structure, homooctamer; tetramer of dimers.

The protein resides in the cytoplasm. The enzyme catalyses 3-amino-2-oxopropyl phosphate + 1-deoxy-D-xylulose 5-phosphate = pyridoxine 5'-phosphate + phosphate + 2 H2O + H(+). The protein operates within cofactor biosynthesis; pyridoxine 5'-phosphate biosynthesis; pyridoxine 5'-phosphate from D-erythrose 4-phosphate: step 5/5. Its function is as follows. Catalyzes the complicated ring closure reaction between the two acyclic compounds 1-deoxy-D-xylulose-5-phosphate (DXP) and 3-amino-2-oxopropyl phosphate (1-amino-acetone-3-phosphate or AAP) to form pyridoxine 5'-phosphate (PNP) and inorganic phosphate. The sequence is that of Pyridoxine 5'-phosphate synthase from Prochlorococcus marinus (strain MIT 9215).